Consider the following 818-residue polypeptide: Cytosolic phospholipase A2 delta (818 aa).

The C2 domain occupies 5 to 124; the sequence is SPGGPPGHPY…LPGKLLRKTF (120 aa). Aspartate 38, aspartate 44, aspartate 94, aspartate 96, and aspartate 102 together coordinate Ca(2+). The PLA2c domain occupies 273-818; that stretch reads GCPEELAVHL…LEARPPRAQT (546 aa). Substrate is bound at residue 330–331; that stretch reads GG. Serine 361 acts as the Nucleophile in catalysis. Aspartate 647 acts as the Proton acceptor in catalysis.

Requires Ca(2+) as cofactor. Expressed in stratified squamous epithelia, such as those in skin and cervix, but not in other tissues. Strongly expressed in the upper spinous layer of the psoriatic epidermis, expressed weakly and discontinuously in atopic dermatitis and mycosis fungoides, and not detected in the epidermis of normal skin.

Its subcellular location is the cytoplasm. It localises to the cytosol. The protein localises to the membrane. It carries out the reaction a 1,2-diacyl-sn-glycero-3-phosphocholine + H2O = a 1-acyl-sn-glycero-3-phosphocholine + a fatty acid + H(+). The catalysed reaction is 1-hexadecanoyl-2-(5Z,8Z,11Z,14Z-eicosatetraenoyl)-sn-glycero-3-phosphocholine + H2O = 1-hexadecanoyl-sn-glycero-3-phosphocholine + (5Z,8Z,11Z,14Z)-eicosatetraenoate + H(+). The enzyme catalyses 1-hexadecanoyl-2-(9Z,12Z-octadecadienoyl)-sn-glycero-3-phosphocholine + H2O = (9Z,12Z)-octadecadienoate + 1-hexadecanoyl-sn-glycero-3-phosphocholine + H(+). It catalyses the reaction 1-hexadecanoyl-2-(9Z-octadecenoyl)-sn-glycero-3-phosphocholine + H2O = 1-hexadecanoyl-sn-glycero-3-phosphocholine + (9Z)-octadecenoate + H(+). It carries out the reaction 1-hexadecanoyl-2-(5Z,8Z,11Z,14Z-eicosatetraenoyl)-sn-glycero-3-phosphoethanolamine + H2O = 1-hexadecanoyl-sn-glycero-3-phosphoethanolamine + (5Z,8Z,11Z,14Z)-eicosatetraenoate + H(+). The catalysed reaction is 1-hexadecanoyl-2-(9Z,12Z-octadecadienoyl)-sn-glycero-3-phosphoethanolamine + H2O = 1-hexadecanoyl-sn-glycero-3-phosphoethanolamine + (9Z,12Z)-octadecadienoate + H(+). The protein operates within lipid metabolism; fatty acid metabolism. Stimulated by cytosolic Ca(2+). Calcium-dependent phospholipase A2 that selectively hydrolyzes glycerophospholipids in the sn-2 position. Has a preference for linoleic acid at the sn-2 position. The sequence is that of Cytosolic phospholipase A2 delta from Homo sapiens (Human).